The sequence spans 188 residues: Thymidine kinase (188 aa).

17–24 contributes to the ATP binding site; that stretch reads GPMFAGKT. Glutamate 92 acts as the Proton acceptor in catalysis. Residue phenylalanine 121 coordinates substrate. Cysteine 146 and cysteine 149 together coordinate Zn(2+). 166 to 170 contacts substrate; sequence LILAG. Zn(2+) is bound by residues cysteine 179 and cysteine 182.

It belongs to the thymidine kinase family.

The enzyme catalyses thymidine + ATP = dTMP + ADP + H(+). Its function is as follows. Phosphorylates thymidine. ASFV replicates in the cytoplasm of infected cells and contains genes encoding a number of enzymes needed for DNA synthesis, including thymidine kinase. Important for growth in swine macrophages in vitro and is a virus virulence factor in swine. The protein is Thymidine kinase of Ornithodoros (relapsing fever ticks).